Consider the following 450-residue polypeptide: Protein tweety homolog 1 (450 aa).

The Extracellular segment spans residues 1-43 (MGAPPGYRPSAWVHLLHQLPRADFQLRPVPSGFAPRDQEYQQA). A helical transmembrane segment spans residues 44–64 (LLLVAALAGLGLGLSLIFIAV). The Cytoplasmic portion of the chain corresponds to 65-88 (YLIRFCCCRPPEPPGAKSPPPGGG). Residues 89–109 (CVTWSCIAALLVGCAGIGIGF) traverse the membrane as a helical segment. Topologically, residues 110-214 (YGNSETSDGV…DVTFVEEYRW (105 aa)) are extracellular. An N-linked (GlcNAc...) asparagine glycan is attached at N130. Residues 215 to 235 (LAYVLLLLLVLLVCLFTLLGL) traverse the membrane as a helical segment. Topologically, residues 236-240 (AKQSK) are cytoplasmic. A helical membrane pass occupies residues 241-261 (WLVVVMTAMSLLVLVLSWGSM). Residues 262-390 (GLEAATAVGL…LRGLCEDALE (129 aa)) lie on the Extracellular side of the membrane. 2 cysteine pairs are disulfide-bonded: C275/C385 and C303/C370. N-linked (GlcNAc...) asparagine glycans are attached at residues N284 and N355. The chain crosses the membrane as a helical span at residues 391 to 411 (GLLFLMLFSLLSAGALATTLC). At 412 to 450 (SLPRAWALFPPSDDYDDTDDDDPFNPQESKRFVQWQSSI) the chain is on the cytoplasmic side. Residues 428–450 (DTDDDDPFNPQESKRFVQWQSSI) form a disordered region. At S440 the chain carries Phosphoserine.

Belongs to the tweety family. As to quaternary structure, homotetramer; disulfide-linked. Homodimer. In terms of processing, N-glycosylated. Contains high-mannose, hybrid and complex oligosaccharides.

The protein localises to the cell membrane. It carries out the reaction chloride(in) = chloride(out). It catalyses the reaction L-glutamate(out) = L-glutamate(in). Its function is as follows. Calcium-independent, swelling-dependent volume-regulated anion channel (VRAC-swell) which plays a pivotal role in the process of regulatory volume decrease (RVD) in the brain through the efflux of anions like chloride and organic osmolytes like glutamate. This Rattus norvegicus (Rat) protein is Protein tweety homolog 1 (Ttyh1).